A 298-amino-acid chain; its full sequence is Calcium-binding protein 1 (298 aa).

Residues 1–10 show a composition bias toward basic and acidic residues; that stretch reads MSSHIAKSES. Residues 1–131 form a disordered region; that stretch reads MSSHIAKSES…APAGTPEADP (131 aa). Residue serine 2 is the site of N-myristoyl glycine attachment. Histidine 4 carries the S-palmitoyl cysteine lipid modification. A compositionally biased stretch (low complexity) spans 11-25; that stretch reads KTSLLKAAAASGGSR. EF-hand domains follow at residues 153–188, 207–224, 230–265, and 267–298; these read EEIE…MGYM, GHVD…KLLA, IGVK…LLGH, and VGHR…MMSR. Residues aspartate 166, aspartate 168, aspartate 170, tyrosine 172, and aspartate 177 each contribute to the Ca(2+) site. The Ca(2+) site is built by aspartate 243, asparagine 245, aspartate 247, and glutamate 249. Position 251 is a phosphoserine (serine 251). 6 residues coordinate Ca(2+): glutamate 254, aspartate 280, asparagine 282, aspartate 284, arginine 286, and glutamate 291.

As to quaternary structure, interacts with ITPR1, ITPR2 and ITPR3. The strength of this interaction inversely correlates with calcium concentration. Interacts with CACNA1A (via C-terminal CDB motif) in the pre- and postsynaptic membranes. Interacts with CACNA1C. Interacts with CACNA1D. Interacts (via EF-hands 1 and 2) at microtubules with MAP1LC3B. Interacts (via EF-hands 1 and 2) with NSMF (via the central NLS-containing motif region), the interaction occurs in a calcium dependent manner after synaptic NMDA receptor stimulation and prevents nuclear import of NSMF. Interacts with MYO1C and TRPC5. Interacts with SPACA9. In terms of processing, phosphorylated. The phosphorylation regulates the activity. In terms of tissue distribution, somatodendritic compartment of neurons. Restricted expression in retina to a subpopulation of amacrine, bipolar, and ganglion cells. According to PubMed:11906216, expression is heterogeneous within brain regions and their major cell types and does not match with those of marker proteins for characterized neuronal subpopulations. Isoform 2: Minor isoform expressed in the brain, in the granule cell layer of the cerebellum, at low level. Not developmentally regulated. Isoform 3: Minor isoform expressed in the brain, in the granule cell layer. of the cerebellum, at low level. Not developmentally regulated.

The protein localises to the cytoplasm. It is found in the cytoskeleton. Functionally, modulates calcium-dependent activity of inositol 1,4,5-triphosphate receptors (ITPRs). Inhibits agonist-induced intracellular calcium signaling. Enhances inactivation and does not support calcium-dependent facilitation of voltage-dependent P/Q-type calcium channels. Causes calcium-dependent facilitation and inhibits inactivation of L-type calcium channels by binding to the same sites as calmodulin in the C-terminal domain of CACNA1C, but has an opposite effect on channel function. Suppresses the calcium-dependent inactivation of CACNA1D. Inhibits TRPC5 channels. Prevents NMDA receptor-induced cellular degeneration. Required for the normal transfer of light signals through the retina. The sequence is that of Calcium-binding protein 1 (Cabp1) from Rattus norvegicus (Rat).